The sequence spans 427 residues: Enolase (427 aa).

Residue glutamine 163 participates in (2R)-2-phosphoglycerate binding. The active-site Proton donor is the glutamate 205. Positions 242, 285, and 312 each coordinate Mg(2+). 4 residues coordinate (2R)-2-phosphoglycerate: lysine 337, arginine 366, serine 367, and lysine 388. Residue lysine 337 is the Proton acceptor of the active site.

It belongs to the enolase family. It depends on Mg(2+) as a cofactor.

It is found in the cytoplasm. Its subcellular location is the secreted. The protein localises to the cell surface. It carries out the reaction (2R)-2-phosphoglycerate = phosphoenolpyruvate + H2O. Its pathway is carbohydrate degradation; glycolysis; pyruvate from D-glyceraldehyde 3-phosphate: step 4/5. In terms of biological role, catalyzes the reversible conversion of 2-phosphoglycerate (2-PG) into phosphoenolpyruvate (PEP). It is essential for the degradation of carbohydrates via glycolysis. This is Enolase from Bradyrhizobium diazoefficiens (strain JCM 10833 / BCRC 13528 / IAM 13628 / NBRC 14792 / USDA 110).